Here is a 568-residue protein sequence, read N- to C-terminus: Cytosolic purine 5'-nucleotidase (568 aa).

The active-site Nucleophile is the Asp-52. IMP contacts are provided by Asp-52 and Asp-54. Mg(2+) contacts are provided by Asp-52 and Asp-54. Asp-54 functions as the Proton donor in the catalytic mechanism. ATP is bound by residues Arg-144 and Asn-154. 7 residues coordinate IMP: Arg-202, Asp-206, Lys-215, Thr-249, Asn-250, Ser-251, and Lys-292. Mg(2+) is bound at residue Asp-351. Gln-453 and Arg-456 together coordinate ATP. Residues 528–568 (ISEIKPPNLFPQKPQEITHCHDEDDDEEEEEEEEEEEEEEE) form a disordered region. The tract at residues 548–568 (HDEDDDEEEEEEEEEEEEEEE) is required for tetramer assembly. Residues 550 to 568 (EDDDEEEEEEEEEEEEEEE) are compositionally biased toward acidic residues.

Belongs to the 5'(3')-deoxyribonucleotidase family. In terms of assembly, homotetramer. The cofactor is Mg(2+).

It is found in the cytoplasm. Its subcellular location is the cytosol. It catalyses the reaction a ribonucleoside 5'-phosphate + H2O = a ribonucleoside + phosphate. The enzyme catalyses a 2'-deoxyribonucleoside + a ribonucleoside 5'-phosphate = a ribonucleoside + a 2'-deoxyribonucleoside 5'-phosphate. It carries out the reaction IMP + H2O = inosine + phosphate. The catalysed reaction is GMP + H2O = guanosine + phosphate. It catalyses the reaction dIMP + H2O = 2'-deoxyinosine + phosphate. The enzyme catalyses dGMP + H2O = 2'-deoxyguanosine + phosphate. It carries out the reaction XMP + H2O = xanthosine + phosphate. The catalysed reaction is inosine + GMP = guanosine + IMP. It catalyses the reaction dGMP + inosine = 2'-deoxyguanosine + IMP. The enzyme catalyses dIMP + inosine = 2'-deoxyinosine + IMP. It carries out the reaction inosine + UMP = uridine + IMP. The catalysed reaction is inosine + CMP = cytidine + IMP. It catalyses the reaction inosine + AMP = IMP + adenosine. Allosterically activated by various compounds including ATP, 2,3-BPG/2,3-Bisphosphoglyceric acid and Ap4A/P1,P4-bis(5'-adenosyl) tetraphosphate. Binding of an allosteric activator is a prerequisiste to magnesium and substrate binding. Inhibited by inorganic phosphate. Its function is as follows. Broad specificity cytosolic 5'-nucleotidase that catalyzes the dephosphorylation of 6-hydroxypurine nucleoside 5'-monophosphates. In addition, possesses a phosphotransferase activity by which it can transfer a phosphate from a donor nucleoside monophosphate to an acceptor nucleoside, preferably inosine, deoxyinosine and guanosine. Has the highest activities for IMP and GMP followed by dIMP, dGMP and XMP. Could also catalyze the transfer of phosphates from pyrimidine monophosphates but with lower efficiency. Through these activities regulates the purine nucleoside/nucleotide pools within the cell. The sequence is that of Cytosolic purine 5'-nucleotidase (nt5c2) from Xenopus tropicalis (Western clawed frog).